A 706-amino-acid polypeptide reads, in one-letter code: Gamma-adducin (706 aa).

Residues 1–11 (MSSDTSPAVVT) show a composition bias toward low complexity. The segment at 1–23 (MSSDTSPAVVTTPPPPSMPHKER) is disordered. S2 bears the N-acetylserine mark. Phosphoserine is present on residues S31, S42, S64, S402, S414, S423, S442, and S461. Disordered stretches follow at residues 471 to 495 (AEDS…VPLN), 534 to 556 (PPST…PFSH), 574 to 610 (QGLD…RLEE), and 651 to 706 (TSTT…KVEA). K484 is covalently cross-linked (Glycyl lysine isopeptide (Lys-Gly) (interchain with G-Cter in SUMO2)). A phosphoserine mark is found at S583, S585, and S590. Composition is skewed to low complexity over residues 590–605 (SVSQ…QSVP) and 651–662 (TSTTIENIEITI). Phosphoserine occurs at positions 673, 677, 679, 681, and 683. The segment covering 682–706 (PSKKKKKFRTPSFLKKNKKKEKVEA) has biased composition (basic residues). An interaction with calmodulin region spans residues 684–701 (KKKKKFRTPSFLKKNKKK).

The protein belongs to the aldolase class II family. Adducin subfamily. Heterodimer of an alpha and a gamma subunit. In terms of processing, sumoylated. Proteolytically cleaved by asparagine endopeptidase (AEP) into 2 fragments. Overexpression of the 1-357 fragment induces neuronal apoptosis, and overexpression of either 1-357 or 358-706 fragment increases the degeneration of dendritic spines. Overexpression of the 1-357 fragment impairs neurite outgrowth by downregulating the expression of Rac2, and induces synaptic dysfunction and cognitive impairments in tau P301S transgenic mice, a mouse model for Alzheimer disease (AD). Cleavage fragment 1-357 is expressed in the brain and the expression increases with age (at protein level). The fragment is expressed in the cortex, hippocampal CA1 region and hippocampal dentate gyrus in tau P301S transgenic mice, a mouse model for Alzheimer disease (AD) (at protein level). The fragment is only weakly expressed in non-transgenic mouse brain sections (at protein level).

The protein localises to the cytoplasm. Its subcellular location is the cytoskeleton. It localises to the cell membrane. Functionally, membrane-cytoskeleton-associated protein that promotes the assembly of the spectrin-actin network. Plays a role in actin filament capping. Binds to calmodulin. Involved in myogenic reactivity of the renal afferent arteriole (Af-art), renal interlobular arteries and middle cerebral artery (MCA) to increased perfusion pressure. Involved in regulation of potassium channels in the vascular smooth muscle cells (VSMCs) of the Af-art and MCA ex vivo. Involved in regulation of glomerular capillary pressure, glomerular filtration rate (GFR) and glomerular nephrin expression in response to hypertension. Involved in renal blood flow (RBF) autoregulation. Plays a role in podocyte structure and function. Regulates globular monomer actin (G-actin) and filamentous polymer actin (F-actin) ratios in the primary podocytes affecting actin cytoskeleton organization. Regulates expression of synaptopodin, RhoA, Rac1 and CDC42 in the renal cortex and the primary podocytes. Regulates expression of nephrin in the glomeruli and in the primary podocytes, expression of nephrin and podocinin in the renal cortex, and expression of focal adhesion proteins integrin alpha-3 and integrin beta-1 in the glomeruli. Involved in cell migration and cell adhesion of podocytes, and in podocyte foot process effacement. Regulates expression of profibrotics markers MMP2, MMP9, TGF beta-1, tubular tight junction protein E-cadherin, and mesenchymal markers vimentin and alpha-SMA. Promotes the growth of neurites. This chain is Gamma-adducin (Add3), found in Mus musculus (Mouse).